A 1004-amino-acid chain; its full sequence is UPF0182 protein Noca_1530 (1004 aa).

The interval 1–20 (MSELFDEAPRDPGPPARSGS) is disordered. 7 helical membrane passes run 26–46 (LIVT…FAGI), 71–91 (VLFF…IYLA), 120–140 (TWLL…SAIG), 183–203 (MAVL…YGGI), 212–232 (LSGA…LAKA), 261–281 (VLPA…LFFV), and 293–313 (VGLA…PGIV). Disordered regions lie at residues 899–924 (GVST…PPAT) and 974–1004 (LGQK…SPSS). Composition is skewed to low complexity over residues 903-916 (GPGT…QPGD) and 979-1004 (GSAG…SPSS).

Belongs to the UPF0182 family.

It localises to the cell membrane. This is UPF0182 protein Noca_1530 from Nocardioides sp. (strain ATCC BAA-499 / JS614).